A 530-amino-acid chain; its full sequence is Glutamate--tRNA ligase (530 aa).

The 'HIGH' region motif lies at 26 to 36 (PSPTGKAHIGT). Positions 267–271 (KLSKR) match the 'KMSKS' region motif. Lysine 270 lines the ATP pocket.

It belongs to the class-I aminoacyl-tRNA synthetase family. Glutamate--tRNA ligase type 1 subfamily. In terms of assembly, monomer.

Its subcellular location is the cytoplasm. The catalysed reaction is tRNA(Glu) + L-glutamate + ATP = L-glutamyl-tRNA(Glu) + AMP + diphosphate. Catalyzes the attachment of glutamate to tRNA(Glu) in a two-step reaction: glutamate is first activated by ATP to form Glu-AMP and then transferred to the acceptor end of tRNA(Glu). The polypeptide is Glutamate--tRNA ligase (Gloeobacter violaceus (strain ATCC 29082 / PCC 7421)).